A 323-amino-acid chain; its full sequence is tRNA U34 carboxymethyltransferase (323 aa).

Residues Lys91, Trp105, Lys110, Gly130, 180–181 (VE), Met196, Tyr200, and Arg315 contribute to the carboxy-S-adenosyl-L-methionine site.

Belongs to the class I-like SAM-binding methyltransferase superfamily. CmoB family. As to quaternary structure, homotetramer.

The catalysed reaction is carboxy-S-adenosyl-L-methionine + 5-hydroxyuridine(34) in tRNA = 5-carboxymethoxyuridine(34) in tRNA + S-adenosyl-L-homocysteine + H(+). Its function is as follows. Catalyzes carboxymethyl transfer from carboxy-S-adenosyl-L-methionine (Cx-SAM) to 5-hydroxyuridine (ho5U) to form 5-carboxymethoxyuridine (cmo5U) at position 34 in tRNAs. The protein is tRNA U34 carboxymethyltransferase of Trichlorobacter lovleyi (strain ATCC BAA-1151 / DSM 17278 / SZ) (Geobacter lovleyi).